The chain runs to 422 residues: Phospholipase D Z (422 aa).

Positions 1–18 (MMMKLLFLIALFGCVVNS) are cleaved as a signal peptide. N-linked (GlcNAc...) asparagine glycosylation is present at asparagine 53. Residues 148-175 (GAGILHTKVIVVDQVSAYLGSANLDWRS) enclose the PLD phosphodiesterase 1 domain. Residues histidine 153, lysine 155, and aspartate 160 contribute to the active site. N-linked (GlcNAc...) asparagine glycosylation is found at asparagine 225 and asparagine 320. Residues 357–383 (FTRVNHAKYMVTDEQSYVGTSNWSEDY) enclose the PLD phosphodiesterase 2 domain. Residues histidine 362, lysine 364, and aspartate 369 contribute to the active site. An N-linked (GlcNAc...) asparagine glycan is attached at asparagine 378.

The protein belongs to the phospholipase D family.

It catalyses the reaction a 1,2-diacyl-sn-glycero-3-phosphocholine + H2O = a 1,2-diacyl-sn-glycero-3-phosphate + choline + H(+). Its activity is regulated as follows. Inhibited by butan-1-ol. In terms of biological role, hydrolyzes membrane phospholipids, such as PtdCho (phosphatidylcholine), producing the free headgroup and PtdOH (phosphatidic acid; signaling molecule on its own). The protein is Phospholipase D Z (pldZ) of Dictyostelium discoideum (Social amoeba).